Here is a 650-residue protein sequence, read N- to C-terminus: DNA topoisomerase 3 (650 aa).

Residues 1-134 (MRLFIAEKPS…KLNQIQRCLI (134 aa)) form the Toprim domain. Mg(2+) is bound by residues Glu-7, Asp-103, and Asp-105. Residues 155–617 (FIPLATSALA…TLTNFLPELM (463 aa)) enclose the Topo IA-type catalytic domain. An interaction with DNA region spans residues 194 to 199 (SVGRVQ). Tyr-342 serves as the catalytic O-(5'-phospho-DNA)-tyrosine intermediate.

The protein belongs to the type IA topoisomerase family. Mg(2+) is required as a cofactor.

It carries out the reaction ATP-independent breakage of single-stranded DNA, followed by passage and rejoining.. Releases the supercoiling and torsional tension of DNA, which is introduced during the DNA replication and transcription, by transiently cleaving and rejoining one strand of the DNA duplex. Introduces a single-strand break via transesterification at a target site in duplex DNA. The scissile phosphodiester is attacked by the catalytic tyrosine of the enzyme, resulting in the formation of a DNA-(5'-phosphotyrosyl)-enzyme intermediate and the expulsion of a 3'-OH DNA strand. The free DNA strand then undergoes passage around the unbroken strand, thus removing DNA supercoils. Finally, in the religation step, the DNA 3'-OH attacks the covalent intermediate to expel the active-site tyrosine and restore the DNA phosphodiester backbone. The polypeptide is DNA topoisomerase 3 (Pasteurella multocida (strain Pm70)).